We begin with the raw amino-acid sequence, 525 residues long: Lysine--tRNA ligase (525 aa).

The 'HIGH' region motif lies at 44–52 (PSGLPHIGT). The 'KMSKS' region signature appears at 290 to 294 (KISKS). An ATP-binding site is contributed by lysine 293.

The protein belongs to the class-I aminoacyl-tRNA synthetase family.

The protein localises to the cytoplasm. The catalysed reaction is tRNA(Lys) + L-lysine + ATP = L-lysyl-tRNA(Lys) + AMP + diphosphate. The chain is Lysine--tRNA ligase from Rickettsia felis (strain ATCC VR-1525 / URRWXCal2) (Rickettsia azadi).